The following is a 341-amino-acid chain: L-threonine 3-dehydrogenase (341 aa).

Residue Cys-38 participates in Zn(2+) binding. Active-site charge relay system residues include Thr-40 and His-43. Zn(2+) is bound by residues His-63, Glu-64, Cys-93, Cys-96, Cys-99, and Cys-107. Residues Ile-175, Asp-195, Arg-200, 262–264 (LGI), and 286–287 (IY) each bind NAD(+).

It belongs to the zinc-containing alcohol dehydrogenase family. In terms of assembly, homotetramer. Zn(2+) serves as cofactor.

The protein localises to the cytoplasm. It carries out the reaction L-threonine + NAD(+) = (2S)-2-amino-3-oxobutanoate + NADH + H(+). The protein operates within amino-acid degradation; L-threonine degradation via oxydo-reductase pathway; glycine from L-threonine: step 1/2. Functionally, catalyzes the NAD(+)-dependent oxidation of L-threonine to 2-amino-3-ketobutyrate. This is L-threonine 3-dehydrogenase from Shewanella pealeana (strain ATCC 700345 / ANG-SQ1).